Here is a 411-residue protein sequence, read N- to C-terminus: CinA-like protein (411 aa).

This sequence belongs to the CinA family.

This is CinA-like protein from Dictyoglomus thermophilum (strain ATCC 35947 / DSM 3960 / H-6-12).